Reading from the N-terminus, the 1040-residue chain is Myoblast growth factor receptor egl-15 (1040 aa).

Residues 1–19 (MSYFLASCLGVGLLSTVSC) form the signal peptide. Residues 20 to 525 (SLQGLTSHYR…PKIDRWTTSD (506 aa)) are Extracellular-facing. In terms of domain architecture, Ig-like C2-type 1 spans 33–125 (PRFKHVANER…GQISRNFTVE (93 aa)). Cys-55 and Cys-109 form a disulfide bridge. An N-linked (GlcNAc...) asparagine glycan is attached at Asn-121. The segment covering 234–257 (VHDSEESPSESRTEFINADEKENK) has biased composition (basic and acidic residues). Residues 234-267 (VHDSEESPSESRTEFINADEKENKEDEEEDYSVS) are disordered. Asn-280 and Asn-299 each carry an N-linked (GlcNAc...) asparagine glycan. Ig-like C2-type domains follow at residues 287-383 (PYFK…FHVI) and 391-501 (PPII…ATLT). Residues Cys-314 and Cys-367 are joined by a disulfide bond. N-linked (GlcNAc...) asparagine glycosylation is found at Asn-401, Asn-407, Asn-433, Asn-440, Asn-449, Asn-474, and Asn-497. A disulfide bond links Cys-414 and Cys-485. A helical transmembrane segment spans residues 526–549 (YIFTTILLFLLLAATLFGILFMVC). Residues 550–1040 (KQTLHKKGFM…NNNSMSKPEF (491 aa)) lie on the Cytoplasmic side of the membrane. Positions 640-931 (LSLVHMLGEG…KTIVDYLDWM (292 aa)) constitute a Protein kinase domain. ATP contacts are provided by residues 646–654 (LGEGAFGEV) and Lys-672. Asp-797 (proton acceptor) is an active-site residue. A Phosphotyrosine; by autocatalysis modification is found at Tyr-828. Disordered regions lie at residues 952-984 (ERST…LPSE) and 1021-1040 (TPET…KPEF). Residues 1022 to 1040 (PETSQRIPSNNNSMSKPEF) are compositionally biased toward polar residues.

Belongs to the protein kinase superfamily. Tyr protein kinase family. Fibroblast growth factor receptor subfamily. Requires Mg(2+) as cofactor. In terms of processing, activity is regulated by the phosphatase clr-1, however it is not known whether clr-1 acts directly on egl-15.

It localises to the membrane. It catalyses the reaction L-tyrosyl-[protein] + ATP = O-phospho-L-tyrosyl-[protein] + ADP + H(+). Its function is as follows. Receptor tyrosine kinase required for larval development. May phosphorylate adapter protein soc-1 which in turn may result in the recruitment and/or activation of phosphatase ptp-2. May activate the Ras/MAPK kinase signaling pathway which includes sem-5, sos-1, let-60/Ras, lin-45/Raf, mek-2 and mpk-1. Acts in the hypodermis to regulate axon growth and fluid homeostasis. Activates protein degradation in muscles. Probably following interaction with ligand let-756, negatively regulates membrane protrusion from body wall muscles during larval development. Plays a role in nicotinic acetylcholine receptor (nAChR)-mediated sensitivity to nicotine. Regulates synaptic levels of nAChR subunit lev-1 in the nerve cord. Functionally, affects the maintenance of axon position without affecting axon growth. Interaction with egl-17 is required for the guidance of sex myoblast migration during gonad development. Interaction with let-756 appears to play a role in maintaining body morphology at higher temperatures. This chain is Myoblast growth factor receptor egl-15 (egl-15), found in Caenorhabditis elegans.